The primary structure comprises 129 residues: Ribosome-binding factor A (129 aa).

This sequence belongs to the RbfA family. As to quaternary structure, monomer. Binds 30S ribosomal subunits, but not 50S ribosomal subunits or 70S ribosomes.

Its subcellular location is the cytoplasm. Its function is as follows. One of several proteins that assist in the late maturation steps of the functional core of the 30S ribosomal subunit. Associates with free 30S ribosomal subunits (but not with 30S subunits that are part of 70S ribosomes or polysomes). Required for efficient processing of 16S rRNA. May interact with the 5'-terminal helix region of 16S rRNA. This chain is Ribosome-binding factor A, found in Gloeobacter violaceus (strain ATCC 29082 / PCC 7421).